We begin with the raw amino-acid sequence, 940 residues long: BTB/POZ domain-containing protein FBL11 (940 aa).

The 69-residue stretch at 41-109 (WDMSEILSYG…LYGYDIEITS (69 aa)) folds into the BTB domain. The BACK domain occupies 155-258 (IQIWSFGLEH…FSLLPLWFIA (104 aa)).

The protein operates within protein modification; protein ubiquitination. Its function is as follows. May act as a substrate-specific adapter of an E3 ubiquitin-protein ligase complex (CUL3-RBX1-BTB) which mediates the ubiquitination and subsequent proteasomal degradation of target proteins. This Arabidopsis thaliana (Mouse-ear cress) protein is BTB/POZ domain-containing protein FBL11 (FBL11).